A 715-amino-acid chain; its full sequence is Putative membrane protein IgaA homolog (715 aa).

A run of 5 helical transmembrane segments spans residues 2–22, 214–234, 235–255, 349–369, and 663–683; these read STIVLILALLLTSLIAVGLLW, EACAICIALLLLFFALSGPTV, TLPWLVIVAVSLTCWACWYLF, NLTLIVGSLLVLVLLLIYVPL, and ATSLLLLVLIFCLVVNMVLLI.

Belongs to the IgaA family.

Its subcellular location is the cell inner membrane. In Yersinia pestis, this protein is Putative membrane protein IgaA homolog.